The chain runs to 493 residues: Cytochrome P450 2E1 (493 aa).

Residue 298-303 coordinates substrate; sequence FAGTET. Cys437 lines the heme pocket.

Belongs to the cytochrome P450 family. Interacts with chaperones HSP70 and HSP90; this interaction is required for initial targeting to mitochondria. The cofactor is heme.

The protein localises to the endoplasmic reticulum membrane. It localises to the microsome membrane. The protein resides in the mitochondrion inner membrane. The catalysed reaction is an organic molecule + reduced [NADPH--hemoprotein reductase] + O2 = an alcohol + oxidized [NADPH--hemoprotein reductase] + H2O + H(+). The enzyme catalyses (5Z,8Z,11Z)-eicosatrienoate + reduced [NADPH--hemoprotein reductase] + O2 = 19-hydroxy-(5Z,8Z,11Z)-eicosatrienoate + oxidized [NADPH--hemoprotein reductase] + H2O + H(+). It catalyses the reaction (5Z,8Z,11Z,14Z,17Z)-eicosapentaenoate + reduced [NADPH--hemoprotein reductase] + O2 = 19-hydroxy-(5Z,8Z,11Z,14Z,17Z)-eicosapentaenoate + oxidized [NADPH--hemoprotein reductase] + H2O + H(+). It carries out the reaction (4Z,7Z,10Z,13Z,16Z,19Z)-docosahexaenoate + reduced [NADPH--hemoprotein reductase] + O2 = 21-hydroxy-(4Z,7Z,10Z,13Z,16Z,19Z)-docosahexaenoate + oxidized [NADPH--hemoprotein reductase] + H2O + H(+). The catalysed reaction is dodecanoate + reduced [NADPH--hemoprotein reductase] + O2 = 11-hydroxydodecanoate + oxidized [NADPH--hemoprotein reductase] + H2O + H(+). The enzyme catalyses tetradecanoate + reduced [NADPH--hemoprotein reductase] + O2 = 13-hydroxytetradecanoate + oxidized [NADPH--hemoprotein reductase] + H2O + H(+). It catalyses the reaction 4-nitrophenol + NADPH + O2 + H(+) = 4-nitrocatechol + NADP(+) + H2O. The protein operates within lipid metabolism; fatty acid metabolism. With respect to regulation, the omega-1 hydroxylase activity is stimulated by cytochrome b5. Functionally, a cytochrome P450 monooxygenase involved in the metabolism of fatty acids. Mechanistically, uses molecular oxygen inserting one oxygen atom into a substrate, and reducing the second into a water molecule, with two electrons provided by NADPH via cytochrome P450 reductase (NADPH--hemoprotein reductase). Catalyzes the hydroxylation of carbon-hydrogen bonds. Hydroxylates fatty acids specifically at the omega-1 position displaying the highest catalytic activity for saturated fatty acids. May be involved in the oxidative metabolism of xenobiotics. The polypeptide is Cytochrome P450 2E1 (Homo sapiens (Human)).